A 256-amino-acid polypeptide reads, in one-letter code: MVATGGQAQDQSHNQEPGVLCPTSAVTGLPQKRYYRQRAHSNPIADHSFDYPARPEDVDWRSMYPSIQQGQQVSFADIGCGYGGFLITLGEMFPEKLSIGMEIRVKVSDYVVDRIAALRRKGADTGAYQNVACLRTNAMKYLPNYFAKGQLEKMFFLYPDPHFKRAKHKWRIINQALLSEYAYVLRKGGLVYTMTDVEDLHKWIVAHMEEHPLYERLTEEEANADPITPKLYQSSEEGAKVVRNKGDHFLAIFRRL.

A compositionally biased stretch (polar residues) spans 1 to 15 (MVATGGQAQDQSHNQ). The interval 1–22 (MVATGGQAQDQSHNQEPGVLCP) is disordered. S-adenosyl-L-methionine-binding positions include Gly79, 102-103 (EI), 137-138 (NA), and Leu157. Residue Asp160 is part of the active site. 235–237 (SEE) contributes to the S-adenosyl-L-methionine binding site.

Belongs to the class I-like SAM-binding methyltransferase superfamily. TrmB family.

The protein resides in the nucleus. The enzyme catalyses guanosine(46) in tRNA + S-adenosyl-L-methionine = N(7)-methylguanosine(46) in tRNA + S-adenosyl-L-homocysteine. It participates in tRNA modification; N(7)-methylguanine-tRNA biosynthesis. In terms of biological role, catalyzes the formation of N(7)-methylguanine at position 46 (m7G46) in tRNA. In Drosophila yakuba (Fruit fly), this protein is tRNA (guanine-N(7)-)-methyltransferase.